A 468-amino-acid chain; its full sequence is ATP-dependent protease ATPase subunit HslU (468 aa).

Residues V22 and G64–E69 contribute to the ATP site. Residues F166–E187 are disordered. Residues N169–T178 show a composition bias toward acidic residues. D281, E346, and R418 together coordinate ATP.

Belongs to the ClpX chaperone family. HslU subfamily. In terms of assembly, a double ring-shaped homohexamer of HslV is capped on each side by a ring-shaped HslU homohexamer. The assembly of the HslU/HslV complex is dependent on binding of ATP.

The protein localises to the cytoplasm. Its function is as follows. ATPase subunit of a proteasome-like degradation complex; this subunit has chaperone activity. The binding of ATP and its subsequent hydrolysis by HslU are essential for unfolding of protein substrates subsequently hydrolyzed by HslV. HslU recognizes the N-terminal part of its protein substrates and unfolds these before they are guided to HslV for hydrolysis. The polypeptide is ATP-dependent protease ATPase subunit HslU (Staphylococcus carnosus (strain TM300)).